We begin with the raw amino-acid sequence, 944 residues long: ATP-dependent RNA helicase DDX42 (944 aa).

Residues 1–18 (MNWNKGGPGTKRGFGFGG) show a composition bias toward gly residues. Disordered regions lie at residues 1–119 (MNWN…LEAF), 131–155 (MKRL…EEED), and 182–203 (EYDS…LPPI). The segment covering 35–52 (SHSAFGTAGSSAAFAKSG) has biased composition (low complexity). Over residues 70 to 84 (DEENAYFEDEEEDNS) the composition is skewed to acidic residues. A coiled-coil region spans residues 120 to 157 (MAEVEDQAARDMKRLEDKDKEKKNAKGIRDDIEEEDDQ). Residues 131 to 149 (MKRLEDKDKEKKNAKGIRD) show a composition bias toward basic and acidic residues. The Q motif signature appears at 253-281 (SSFARFGFDEQLMHQIRKSEYTQPTPIQC). A Helicase ATP-binding domain is found at 284–459 (VPVAMSGRDM…RDILIDPIRV (176 aa)). Position 297 to 304 (297 to 304 (AKTGSGKT)) interacts with ATP. The short motif at 407–410 (DEAD) is the DEAD box element. One can recognise a Helicase C-terminal domain in the interval 487 to 632 (WLTRRLVEFT…HVSKELLDLA (146 aa)). Disordered stretches follow at residues 642-682 (RFKG…VMSN), 723-753 (GSSA…AANP), and 794-944 (SANA…RWDS). The span at 723–737 (GSSAAGASGWTSAGS) shows a compositional bias: low complexity. Positions 738 to 752 (LNSVPTSSAQQNAAN) are enriched in polar residues. The span at 794-814 (SANASAGNREGVGSAGSAPRG) shows a compositional bias: low complexity. Residues 815 to 824 (GSSGGGGGGI) show a composition bias toward gly residues. Basic and acidic residues-rich tracts occupy residues 825-887 (VRER…RHFT) and 901-926 (NISE…DNKT).

It belongs to the DEAD box helicase family. DDX42 subfamily. In terms of assembly, transient component of the SF3B subcomplex of the 17S U2 SnRNP complex.

The protein localises to the cytoplasm. Its subcellular location is the nucleus. The enzyme catalyses ATP + H2O = ADP + phosphate + H(+). ATP-dependent RNA helicase that binds to partially double-stranded RNAs (dsRNAs) in order to unwind RNA secondary structures. Unwinding is promoted in the presence of single-strand binding proteins. Also mediates RNA duplex formation thereby displacing the single-strand RNA binding protein. ATP and ADP modulate its activity: ATP binding and hydrolysis by DDX42 triggers RNA strand separation, whereas the ADP-bound form of the protein triggers annealing of complementary RNA strands. Required for assembly of the 17S U2 SnRNP complex of the spliceosome, a large ribonucleoprotein complex that removes introns from transcribed pre-mRNAs: DDX42 associates transiently with the SF3B subcomplex of the 17S U2 SnRNP complex and is released after fulfilling its role in the assembly of 17S U2 SnRNP. This is ATP-dependent RNA helicase DDX42 (DDX42) from Gallus gallus (Chicken).